The sequence spans 168 residues: Transmembrane protein 31 (168 aa).

Basic and acidic residues predominate over residues 1–11 (MRLTEKSEGEQ). A disordered region spans residues 1–63 (MRLTEKSEGE…LPSRRTPTTS (63 aa)). Composition is skewed to polar residues over residues 13–22 (LKPNNSNAPN) and 35–48 (HTPA…ADTQ). The span at 49–63 (PSRCRLPSRRTPTTS) shows a compositional bias: low complexity. Transmembrane regions (helical) follow at residues 119 to 139 (IGLP…YKFF) and 148 to 168 (FFIL…LIFF).

It localises to the membrane. In Homo sapiens (Human), this protein is Transmembrane protein 31 (TMEM31).